Here is a 202-residue protein sequence, read N- to C-terminus: Recombination protein RecR (202 aa).

A C4-type zinc finger spans residues 57–72 (CRDCRTFTEDDICAVC). The Toprim domain maps to 81–176 (GQICVVESPA…PATRIAHGVP (96 aa)).

This sequence belongs to the RecR family.

Its function is as follows. May play a role in DNA repair. It seems to be involved in an RecBC-independent recombinational process of DNA repair. It may act with RecF and RecO. The chain is Recombination protein RecR from Photobacterium profundum (strain SS9).